Here is a 541-residue protein sequence, read N- to C-terminus: Light-independent protochlorophyllide reductase subunit B (541 aa).

Asp-36 serves as a coordination point for [4Fe-4S] cluster. Asp-286 acts as the Proton donor in catalysis. 421-422 (GM) is a substrate binding site.

The protein belongs to the ChlB/BchB/BchZ family. In terms of assembly, protochlorophyllide reductase is composed of three subunits; BchL, BchN and BchB. Forms a heterotetramer of two BchB and two BchN subunits. The cofactor is [4Fe-4S] cluster.

The enzyme catalyses chlorophyllide a + oxidized 2[4Fe-4S]-[ferredoxin] + 2 ADP + 2 phosphate = protochlorophyllide a + reduced 2[4Fe-4S]-[ferredoxin] + 2 ATP + 2 H2O. The protein operates within porphyrin-containing compound metabolism; bacteriochlorophyll biosynthesis (light-independent). Its function is as follows. Component of the dark-operative protochlorophyllide reductase (DPOR) that uses Mg-ATP and reduced ferredoxin to reduce ring D of protochlorophyllide (Pchlide) to form chlorophyllide a (Chlide). This reaction is light-independent. The NB-protein (BchN-BchB) is the catalytic component of the complex. The protein is Light-independent protochlorophyllide reductase subunit B of Chloroflexus aurantiacus (strain ATCC 29364 / DSM 637 / Y-400-fl).